Here is a 469-residue protein sequence, read N- to C-terminus: Protein RUFY3 (469 aa).

Phosphothreonine is present on residues threonine 5 and threonine 12. A phosphoserine mark is found at serine 34 and serine 49. Phosphothreonine is present on threonine 51. The RUN domain occupies 95–227; sequence DSDYAPLQQF…IDANFCMKGE (133 aa). Coiled coils occupy residues 271–362 and 422–463; these read NRHL…VEKE and KSEL…AANK.

As to quaternary structure, interacts with PAK1. Interacts (via C-terminus) with Ras-related Rab-5 proteins. Interacts (via C-terminus) with Ras-related Rap-2 proteins. Interacts with PIK3CA and PIK3R1. Interacts (via N-terminus) with FSCN1; this interaction induces neuron axon development. Interacts with DBN1. Interacts (via the second coiled coil) with GTP-, but not GDP-bound ARL8A and ARL8B. Interacts with dynactin/DCTN1 and the dynein intermediate chain DYNC1I1/2. Directly interacts with DYNC1LI1. In terms of processing, isoform 1 is partially phosphorylated. Phosphorylated by PAK1. In terms of tissue distribution, expressed in brain (at protein level).

The protein resides in the cytoplasm. It localises to the endomembrane system. The protein localises to the cell projection. It is found in the invadopodium. Its subcellular location is the growth cone. The protein resides in the perikaryon. It localises to the filopodium. The protein localises to the lamellipodium. It is found in the lysosome. ARL8 effector that promotes the coupling of endolysosomes to dynein-dynactin for retrograde transport along microtubules. Acts by binding both GTP-bound ARL8 and dynein-dynactin. In nonneuronal cells, promotes concentration of endolysosomes in the juxtanuclear area. In hippocampal neurons, drives retrograde transport of endolysosomes from the axon to the soma. Plays a role in the generation of neuronal polarity formation and axon growth. Implicated in the formation of a single axon by developing neurons. May inhibit the formation of additional axons by inhibition of PI3K in minor neuronal processes. Plays a role in the formation of F-actin-enriched protrusive structures at the cell periphery. Plays a role in cytoskeletal organization by regulating the subcellular localization of FSCN1 and DBN1 at axonal growth cones. The protein is Protein RUFY3 of Rattus norvegicus (Rat).